The primary structure comprises 377 residues: MLSTKFTLRSHKSSVAYIYQDPRTPFNLFTADSSGLIINWDLTIRRPKKSWQAHTDTILTISTIHNHLLTHSRDNTIKIWDESYSCVLEIPCNALNFSNICIIYDLLITPASINSNNLDVYKIDKDWQITRLISDFDVYKLVNKGEIIEEIGSSGTSRNDFGIIMQMKIIHTNTTTTTSENNSDYIIYVGFESGDIVGLQLILPRARILSTTGNTNDKTLINQSAKFILQYHNSTHVPNPVICLSNLDSVLVSGSTTNKVIIHSDPIEIMKMDHSGIQAIVNFKNDRLIFGYWNGYIQYGDISINQSLPKLGNTEQEKSKLTKKLTFMTILNESNQETLQSPTGKSKYLALLKSKRNLVFPLLLAGYEDGSILAYNI.

5 WD repeats span residues 10-50 (SHKS…PKKS), 53-90 (AHTD…VLEI), 230-262 (QYHN…KVII), 263-303 (HSDP…GDIS), and 342-377 (PTGK…AYNI).

This sequence belongs to the WD repeat ASA1 family. As to quaternary structure, component of the ASTRA chromatin remodeling machinery complex.

The protein resides in the nucleus. Its function is as follows. Component of the ASTRA complex involved in chromatin remodeling. The polypeptide is ASTRA-associated protein 1 (ASA1) (Candida albicans (strain SC5314 / ATCC MYA-2876) (Yeast)).